We begin with the raw amino-acid sequence, 440 residues long: Chromosome partition protein MukF (440 aa).

The tract at residues 208-236 is leucine-zipper; that stretch reads LSETSGTLRELQDTLEAAGDKLQANLLQI.

This sequence belongs to the MukF family. In terms of assembly, interacts, and probably forms a ternary complex, with MukE and MukB via its C-terminal region. The complex formation is stimulated by calcium or magnesium. It is required for an interaction between MukE and MukB.

It is found in the cytoplasm. The protein localises to the nucleoid. Functionally, involved in chromosome condensation, segregation and cell cycle progression. May participate in facilitating chromosome segregation by condensation DNA from both sides of a centrally located replisome during cell division. Not required for mini-F plasmid partitioning. Probably acts via its interaction with MukB and MukE. Overexpression results in anucleate cells. It has a calcium binding activity. This chain is Chromosome partition protein MukF, found in Cronobacter sakazakii (strain ATCC BAA-894) (Enterobacter sakazakii).